The following is a 453-amino-acid chain: Proton extrusion protein PxcA (453 aa).

The interval 147–189 is disordered; that stretch reads SQDKETQTLDNKSTNQTNSKLSNNNKISSGQNDSRLESASQKT. A compositionally biased stretch (polar residues) spans 154-163; that stretch reads TLDNKSTNQT. Residues 164–175 are compositionally biased toward low complexity; the sequence is NSKLSNNNKISS. Residues 176 to 189 show a composition bias toward polar residues; that stretch reads GQNDSRLESASQKT. The next 4 helical transmembrane spans lie at 235–255, 330–350, 377–397, and 413–433; these read FILLLIIVPLLTHQLTKTFLL, SIGNVFADLFSVTAFAIVIVS, LIILFTDMFVGFHSPHGWEVI, and FNFLFIATFPVILDTVLKYWI.

Belongs to the CemA family.

It is found in the cell inner membrane. Its function is as follows. Required for H(+) efflux immediately after light irradiation to form a rapid H(+) concentration gradient across the thylakoid membranes. Together with PxcL, contributes to transient H(+) uptake following dark to light transition. This chain is Proton extrusion protein PxcA, found in Crocosphaera subtropica (strain ATCC 51142 / BH68) (Cyanothece sp. (strain ATCC 51142)).